A 121-amino-acid polypeptide reads, in one-letter code: Thioredoxin-like protein (121 aa).

The 111-residue stretch at 2–112 (VHHITSNDEL…LGAAAEKLGG (111 aa)) folds into the Thioredoxin domain. Residues C30 and C33 are joined by a disulfide bond.

The protein belongs to the thioredoxin family.

In terms of biological role, participates in various redox reactions through the reversible oxidation of its active center dithiol to a disulfide and catalyzes dithiol-disulfide exchange reactions. The protein is Thioredoxin-like protein of Fusarium culmorum.